The sequence spans 119 residues: Phosphoribosyl-AMP cyclohydrolase (119 aa).

Asp77 is a Mg(2+) binding site. Cys78 provides a ligand contact to Zn(2+). Mg(2+) is bound by residues Asp79 and Asp81. 2 residues coordinate Zn(2+): Cys94 and Cys101.

This sequence belongs to the PRA-CH family. As to quaternary structure, homodimer. Mg(2+) serves as cofactor. The cofactor is Zn(2+).

The protein localises to the cytoplasm. The enzyme catalyses 1-(5-phospho-beta-D-ribosyl)-5'-AMP + H2O = 1-(5-phospho-beta-D-ribosyl)-5-[(5-phospho-beta-D-ribosylamino)methylideneamino]imidazole-4-carboxamide. The protein operates within amino-acid biosynthesis; L-histidine biosynthesis; L-histidine from 5-phospho-alpha-D-ribose 1-diphosphate: step 3/9. In terms of biological role, catalyzes the hydrolysis of the adenine ring of phosphoribosyl-AMP. The chain is Phosphoribosyl-AMP cyclohydrolase from Cereibacter sphaeroides (strain ATCC 17029 / ATH 2.4.9) (Rhodobacter sphaeroides).